The following is a 114-amino-acid chain: uncharacterized protein (114 aa).

This is an uncharacterized protein from Mycobacterium bovis (strain ATCC BAA-935 / AF2122/97).